A 300-amino-acid polypeptide reads, in one-letter code: ClpXP adapter protein SpxH (300 aa).

This sequence belongs to the SpxH family. As to quaternary structure, interacts with Spx.

The protein resides in the cytoplasm. Its function is as follows. Adapter protein required for efficient degradation of Spx by ClpXP under non-stress conditions. Interaction with Spx stabilizes Spx and exposes the C-terminus of Spx for recognition and proteolysis by ClpXP. This is ClpXP adapter protein SpxH from Bacillus licheniformis (strain ATCC 14580 / DSM 13 / JCM 2505 / CCUG 7422 / NBRC 12200 / NCIMB 9375 / NCTC 10341 / NRRL NRS-1264 / Gibson 46).